The primary structure comprises 198 residues: Putative pseudouridine methyltransferase (198 aa).

S-adenosyl-L-methionine is bound by residues Leu-132 and Cys-186.

It belongs to the methyltransferase superfamily. TrmY family.

Its subcellular location is the cytoplasm. The chain is Putative pseudouridine methyltransferase from Vibrio vulnificus (strain CMCP6).